The primary structure comprises 753 residues: Neuroendocrine convertase 1 (753 aa).

An N-terminal signal peptide occupies residues 1–27 (MEQRGWTLQCTAFAFFCVWCALSSVKA). Positions 28 to 110 (KRQFVNEWAA…QQYEKERSKR (83 aa)) are excised as a propeptide. Residues 129–450 (QWYLQDTRMT…FGLLNAKALV (322 aa)) enclose the Peptidase S8 domain. Active-site charge relay system residues include aspartate 167 and histidine 208. Cystine bridges form between cysteine 225-cysteine 374 and cysteine 317-cysteine 347. The active-site Charge relay system is serine 382. Asparagine 401 carries N-linked (GlcNAc...) asparagine glycosylation. Residues 460-597 (NVPEKKECVV…KLILHGTSSQ (138 aa)) enclose the P/Homo B domain. The cysteines at positions 467 and 494 are disulfide-linked. Polar residues predominate over residues 633–651 (QKSLNGNLLVPKNSSSSNV). Residues 633-663 (QKSLNGNLLVPKNSSSSNVEGRRDEQVQGTP) form a disordered region. Asparagine 645 is a glycosylation site (N-linked (GlcNAc...) asparagine).

Belongs to the peptidase S8 family. Furin subfamily. It depends on Ca(2+) as a cofactor.

It localises to the cytoplasmic vesicle. The protein resides in the secretory vesicle. It carries out the reaction Release of protein hormones, neuropeptides and renin from their precursors, generally by hydrolysis of -Lys-Arg-|- bonds.. In terms of biological role, involved in the processing of hormone and other protein precursors at sites comprised of pairs of basic amino acid residues. Substrates include POMC, renin, enkephalin, dynorphin, somatostatin, insulin and AGRP. This Mus cookii (Cook's mouse) protein is Neuroendocrine convertase 1 (Pcsk1).